Reading from the N-terminus, the 282-residue chain is Pantothenate synthetase (282 aa).

30–37 is an ATP binding site; it reads MGALHAGH. The active-site Proton donor is H37. Q61 contacts (R)-pantoate. Position 61 (Q61) interacts with beta-alanine. 147–150 provides a ligand contact to ATP; sequence GEKD. Q153 is a binding site for (R)-pantoate. ATP is bound by residues V176 and 184–187; that span reads LSSR.

Belongs to the pantothenate synthetase family. As to quaternary structure, homodimer.

The protein localises to the cytoplasm. The catalysed reaction is (R)-pantoate + beta-alanine + ATP = (R)-pantothenate + AMP + diphosphate + H(+). Its pathway is cofactor biosynthesis; (R)-pantothenate biosynthesis; (R)-pantothenate from (R)-pantoate and beta-alanine: step 1/1. In terms of biological role, catalyzes the condensation of pantoate with beta-alanine in an ATP-dependent reaction via a pantoyl-adenylate intermediate. In Bacteroides thetaiotaomicron (strain ATCC 29148 / DSM 2079 / JCM 5827 / CCUG 10774 / NCTC 10582 / VPI-5482 / E50), this protein is Pantothenate synthetase.